A 92-amino-acid chain; its full sequence is MARSLKKNPFVAKNLLKKIYKLNIKTEKEIIITWSRGSTIIPIMVGHTIAIHTGKEHLPIYIMDHMVGHKLGEFAFTLNFRGHAKTDNRSRR.

The protein belongs to the universal ribosomal protein uS19 family.

The protein localises to the plastid. Functionally, protein S19 forms a complex with S13 that binds strongly to the 16S ribosomal RNA. The chain is Small ribosomal subunit protein uS19c from Cuscuta reflexa (Southern Asian dodder).